We begin with the raw amino-acid sequence, 460 residues long: Chromosomal replication initiator protein DnaA (460 aa).

The tract at residues 1-84 (MAVSLWQQCI…RFDIGSRPSA (84 aa)) is domain I, interacts with DnaA modulators. A domain II region spans residues 84–123 (AKKPEPAPVAAVRVPNPQTKASVGTSFNTTEPVANTNHRS). Positions 103 to 123 (KASVGTSFNTTEPVANTNHRS) are disordered. The segment at 124 to 340 (NINPTYQFDN…GALNRVIANA (217 aa)) is domain III, AAA+ region. Residues Gly168, Gly170, Lys171, and Thr172 each coordinate ATP. The interval 341-460 (NFTGRPITID…YANLIRTLSS (120 aa)) is domain IV, binds dsDNA.

This sequence belongs to the DnaA family. Oligomerizes as a right-handed, spiral filament on DNA at oriC.

The protein resides in the cytoplasm. Plays an essential role in the initiation and regulation of chromosomal replication. ATP-DnaA binds to the origin of replication (oriC) to initiate formation of the DNA replication initiation complex once per cell cycle. Binds the DnaA box (a 9 base pair repeat at the origin) and separates the double-stranded (ds)DNA. Forms a right-handed helical filament on oriC DNA; dsDNA binds to the exterior of the filament while single-stranded (ss)DNA is stabiized in the filament's interior. The ATP-DnaA-oriC complex binds and stabilizes one strand of the AT-rich DNA unwinding element (DUE), permitting loading of DNA polymerase. After initiation quickly degrades to an ADP-DnaA complex that is not apt for DNA replication. Binds acidic phospholipids. In Shewanella sp. (strain MR-4), this protein is Chromosomal replication initiator protein DnaA.